An 867-amino-acid chain; its full sequence is Cadherin-related family member 1 (867 aa).

The first 21 residues, 1–21 (MKHEWNLCPSIFFSIFHICLS), serve as a signal peptide directing secretion. Over 22 to 707 (VQTNYGPYFF…SKDNPMKALG (686 aa)) the chain is Extracellular. Cadherin domains follow at residues 39–138 (NGNM…SPGF), 139–250 (LNTP…PPVF), 251–357 (VGTP…PPTF), 363–476 (PQNR…VPRF), 477–580 (SSEY…SPEF), and 572–692 (DIND…GPMA). A helical transmembrane segment spans residues 708-728 (VLAGVMAIMVVITIFISTAMF). Topologically, residues 729–867 (WRNKKSNRVM…KNAGSSMSFY (139 aa)) are cytoplasmic. The disordered stretch occupies residues 777–825 (EMESGPKNENRNNNYQGIPVPPRAPCPPPPPRLMPKVSKTERSLPTVSG). A compositionally biased stretch (pro residues) spans 795-809 (PVPPRAPCPPPPPRL).

In terms of tissue distribution, expressed in photoreceptor cells of the outer nuclear layer of the retina and in the pinal gland.

It is found in the membrane. Its function is as follows. Potential calcium-dependent cell-adhesion protein. This is Cadherin-related family member 1 (cdhr1) from Xenopus laevis (African clawed frog).